The chain runs to 431 residues: D-inositol 3-phosphate glycosyltransferase (431 aa).

1D-myo-inositol 3-phosphate is bound at residue His-21. UDP-N-acetyl-alpha-D-glucosamine contacts are provided by residues 27 to 28 and Gly-35; that span reads QP. 1D-myo-inositol 3-phosphate-binding positions include 32 to 37, Arg-90, Tyr-123, Thr-147, and Arg-167; that span reads DAGGMN. Residues Arg-241, Lys-246, and Gln-307 each contribute to the UDP-N-acetyl-alpha-D-glucosamine site. Residues Tyr-316, Arg-317, and Ala-319 each contribute to the Mg(2+) site. Residues Glu-329 and Glu-337 each coordinate UDP-N-acetyl-alpha-D-glucosamine. Thr-343 lines the Mg(2+) pocket.

It belongs to the glycosyltransferase group 1 family. MshA subfamily. In terms of assembly, homodimer.

It carries out the reaction 1D-myo-inositol 3-phosphate + UDP-N-acetyl-alpha-D-glucosamine = 1D-myo-inositol 2-acetamido-2-deoxy-alpha-D-glucopyranoside 3-phosphate + UDP + H(+). Its function is as follows. Catalyzes the transfer of a N-acetyl-glucosamine moiety to 1D-myo-inositol 3-phosphate to produce 1D-myo-inositol 2-acetamido-2-deoxy-glucopyranoside 3-phosphate in the mycothiol biosynthesis pathway. In Saccharomonospora viridis (strain ATCC 15386 / DSM 43017 / JCM 3036 / CCUG 5913 / NBRC 12207 / NCIMB 9602 / P101) (Thermoactinomyces viridis), this protein is D-inositol 3-phosphate glycosyltransferase.